The primary structure comprises 1452 residues: Spike glycoprotein (1452 aa).

An N-terminal signal peptide occupies residues 1–32 (MIVLVTCLLLLCSYHTVLSTTNNECIQVNVTQ). The tract at residues 33–779 (LAGNENLIRD…WTTTPNFYYY (747 aa)) is S1. The Virion surface segment spans residues 33–1393 (LAGNENLIRD…NRIETYVKWP (1361 aa)). Positions 660–804 (VIYEEGDNIV…DSNDVDCEPV (145 aa)) are interaction with host ANPEP. The interval 780-1452 (SIYNYTSERT…YEPIEKVHVH (673 aa)) is S2. Residues 1025 to 1046 (AGGITLGALGGGAVAIPFAVAV) form a fusion peptide region. The interval 1040-1159 (IPFAVAVQAR…QVDRLITGRL (120 aa)) is heptad repeat 1 (HR1). 2 coiled-coil regions span residues 1107-1151 (QDVV…DAQV) and 1341-1383 (TYLN…LEWL). The segment at 1308-1405 (PDYIDINQTV…VWLLIGLVVV (98 aa)) is heptad repeat 2 (HR2). The helical transmembrane segment at 1394-1413 (WYVWLLIGLVVVFCIPLLLF) threads the bilayer. Residues 1414–1452 (CCFSTGCCGCIGCLGSCCHSICSRRQFENYEPIEKVHVH) are Intravirion-facing. Residues 1448 to 1452 (KVHVH) carry the KxHxx motif.

Belongs to the alphacoronaviruses spike protein family. In terms of assembly, homotrimer. During virus morphogenesis, found in a complex with M and HE proteins. Interacts with host ANPEP.

The protein localises to the virion membrane. It is found in the host endoplasmic reticulum-Golgi intermediate compartment membrane. Its function is as follows. S1 region attaches the virion to the cell membrane by interacting with host ANPEP/aminopeptidase N, initiating the infection. Binding to the receptor probably induces conformational changes in the S glycoprotein unmasking the fusion peptide of S2 region and activating membranes fusion. S2 region belongs to the class I viral fusion protein. Under the current model, the protein has at least 3 conformational states: pre-fusion native state, pre-hairpin intermediate state, and post-fusion hairpin state. During viral and target cell membrane fusion, the coiled coil regions (heptad repeats) regions assume a trimer-of-hairpins structure, positioning the fusion peptide in close proximity to the C-terminal region of the ectodomain. The formation of this structure appears to drive apposition and subsequent fusion of viral and target cell membranes. The chain is Spike glycoprotein from Felidae (cat family).